The primary structure comprises 438 residues: Adenosylhomocysteinase (438 aa).

3 residues coordinate substrate: T61, D137, and E162. T163 to T165 contacts NAD(+). 2 residues coordinate substrate: K192 and D196. NAD(+) is bound by residues N197, G226–G231, E249, N284, I305–H307, and N352.

This sequence belongs to the adenosylhomocysteinase family. NAD(+) serves as cofactor.

The protein localises to the cytoplasm. The catalysed reaction is S-adenosyl-L-homocysteine + H2O = L-homocysteine + adenosine. It participates in amino-acid biosynthesis; L-homocysteine biosynthesis; L-homocysteine from S-adenosyl-L-homocysteine: step 1/1. Its function is as follows. May play a key role in the regulation of the intracellular concentration of adenosylhomocysteine. In Flavobacterium psychrophilum (strain ATCC 49511 / DSM 21280 / CIP 103535 / JIP02/86), this protein is Adenosylhomocysteinase.